We begin with the raw amino-acid sequence, 135 residues long: Type 3 secretion system stator protein (135 aa).

It belongs to the SctL stator family. In terms of assembly, the core secretion machinery of the T3SS is composed of approximately 20 different proteins, including cytoplasmic components, a base, an export apparatus and a needle. This subunit is part of the cytosolic complex.

The protein localises to the cytoplasm. Component of the type III secretion system (T3SS), also called injectisome, which is used to inject bacterial effector proteins into eukaryotic host cells. Acts as a regulator of the HrcN/SctN ATPase activity. This Rhizobium fredii (Sinorhizobium fredii) protein is Type 3 secretion system stator protein.